A 188-amino-acid polypeptide reads, in one-letter code: Ribosome-recycling factor (188 aa).

This sequence belongs to the RRF family.

Its subcellular location is the cytoplasm. Responsible for the release of ribosomes from messenger RNA at the termination of protein biosynthesis. May increase the efficiency of translation by recycling ribosomes from one round of translation to another. This Caulobacter vibrioides (strain NA1000 / CB15N) (Caulobacter crescentus) protein is Ribosome-recycling factor.